We begin with the raw amino-acid sequence, 273 residues long: Nucleotide-binding protein TTHA0319 (273 aa).

Position 8–15 (8–15 (GLSGAGKT)) interacts with ATP. Residue 57-60 (DARA) coordinates GTP.

This sequence belongs to the RapZ-like family.

Its function is as follows. Displays ATPase and GTPase activities. This is Nucleotide-binding protein TTHA0319 from Thermus thermophilus (strain ATCC 27634 / DSM 579 / HB8).